Consider the following 248-residue polypeptide: uncharacterized protein (248 aa).

The chain crosses the membrane as a helical span at residues 30-50; that stretch reads LIALAIFIGLIAIFMFGCKAA. Disordered stretches follow at residues 59–91 and 208–248; these read NRDT…MDPP and TTES…VSTR. 2 stretches are compositionally biased toward polar residues: residues 210-220 and 239-248; these read ESPAPAQSTSN and SLHNETVSTR.

The protein resides in the membrane. This is an uncharacterized protein from Caenorhabditis elegans.